The sequence spans 509 residues: Dihydrolipoyl dehydrogenase, mitochondrial (509 aa).

The N-terminal 35 residues, 1–35 (MQSWSRVYCSLAKRGHFNRISHGLQGVSSVPLRTY), are a transit peptide targeting the mitochondrion. Residue lysine 66 is modified to N6-acetyllysine; alternate. Lysine 66 carries the N6-succinyllysine; alternate modification. FAD-binding positions include 71-80 (EKNDTLGGTC) and lysine 89. A disulfide bridge connects residues cysteine 80 and cysteine 85. An N6-acetyllysine; alternate mark is found at lysine 122, lysine 132, and lysine 143. N6-succinyllysine; alternate occurs at positions 122, 132, and 143. An FAD-binding site is contributed by glycine 154. N6-succinyllysine occurs at positions 159 and 166. 183–185 (TGS) provides a ligand contact to FAD. NAD(+) contacts are provided by residues 220 to 227 (GAGVIGVE) and glutamate 243. N6-succinyllysine is present on residues lysine 273 and lysine 277. Valine 278 contacts NAD(+). Serine 285 and serine 297 each carry phosphoserine. Glycine 314 contributes to the NAD(+) binding site. Lysine 346 carries the N6-acetyllysine modification. FAD contacts are provided by residues aspartate 355 and 361–364 (MLAH). Lysine 410 is modified (N6-acetyllysine; alternate). The residue at position 410 (lysine 410) is an N6-succinyllysine; alternate. An N6-acetyllysine mark is found at lysine 417 and lysine 420. Position 430 is an N6-succinyllysine (lysine 430). Histidine 487 serves as the catalytic Proton acceptor. Serine 502 is modified (phosphoserine). N6-acetyllysine; alternate is present on lysine 505. At lysine 505 the chain carries N6-succinyllysine; alternate.

The protein belongs to the class-I pyridine nucleotide-disulfide oxidoreductase family. In terms of assembly, homodimer. Part of the multimeric pyruvate dehydrogenase complex that contains multiple copies of pyruvate dehydrogenase (subunits PDHA (PDHA1 or PDHA2) and PDHB, E1), dihydrolipoamide acetyltransferase (DLAT, E2) and lipoamide dehydrogenase (DLD, E3). These subunits are bound to an inner core composed of about 48 DLAT and 12 PDHX molecules (by non covalent bonds). The 2-oxoglutarate dehydrogenase complex is composed of OGDH (2-oxoglutarate dehydrogenase; E1), DLST (dihydrolipoamide succinyltransferase; E2), DLD (dihydrolipoamide dehydrogenase; E3) and the assembly factor KGD4. It contains multiple copies of the three enzymatic components (E1, E2 and E3). In the nucleus, the 2-oxoglutarate dehydrogenase complex associates with KAT2A. Interacts with PDHX. FAD is required as a cofactor. Post-translationally, tyrosine phosphorylated.

Its subcellular location is the mitochondrion matrix. The protein localises to the nucleus. It is found in the cell projection. The protein resides in the cilium. It localises to the flagellum. Its subcellular location is the cytoplasmic vesicle. The protein localises to the secretory vesicle. It is found in the acrosome. The catalysed reaction is N(6)-[(R)-dihydrolipoyl]-L-lysyl-[protein] + NAD(+) = N(6)-[(R)-lipoyl]-L-lysyl-[protein] + NADH + H(+). Lipoamide dehydrogenase is a component of the glycine cleavage system as well as an E3 component of three alpha-ketoacid dehydrogenase complexes (pyruvate-, alpha-ketoglutarate-, and branched-chain amino acid-dehydrogenase complex). The 2-oxoglutarate dehydrogenase complex is mainly active in the mitochondrion. A fraction of the 2-oxoglutarate dehydrogenase complex also localizes in the nucleus and is required for lysine succinylation of histones: associates with KAT2A on chromatin and provides succinyl-CoA to histone succinyltransferase KAT2A. In monomeric form may have additional moonlighting function as serine protease. Involved in the hyperactivation of spermatazoa during capacitation and in the spermatazoal acrosome reaction. The sequence is that of Dihydrolipoyl dehydrogenase, mitochondrial (DLD) from Cricetulus griseus (Chinese hamster).